The sequence spans 264 residues: 3-methyl-2-oxobutanoate hydroxymethyltransferase (264 aa).

Asp-41 and Asp-80 together coordinate Mg(2+). 3-methyl-2-oxobutanoate-binding positions include 41 to 42, Asp-80, and Lys-109; that span reads DS. Residue Glu-111 participates in Mg(2+) binding. Catalysis depends on Glu-178, which acts as the Proton acceptor.

This sequence belongs to the PanB family. Homodecamer; pentamer of dimers. The cofactor is Mg(2+).

It localises to the cytoplasm. The catalysed reaction is 3-methyl-2-oxobutanoate + (6R)-5,10-methylene-5,6,7,8-tetrahydrofolate + H2O = 2-dehydropantoate + (6S)-5,6,7,8-tetrahydrofolate. It functions in the pathway cofactor biosynthesis; (R)-pantothenate biosynthesis; (R)-pantoate from 3-methyl-2-oxobutanoate: step 1/2. Catalyzes the reversible reaction in which hydroxymethyl group from 5,10-methylenetetrahydrofolate is transferred onto alpha-ketoisovalerate to form ketopantoate. The polypeptide is 3-methyl-2-oxobutanoate hydroxymethyltransferase (Thermosipho melanesiensis (strain DSM 12029 / CIP 104789 / BI429)).